A 739-amino-acid polypeptide reads, in one-letter code: Polyribonucleotide nucleotidyltransferase (739 aa).

The Mg(2+) site is built by Asp487 and Asp493. One can recognise a KH domain in the interval Pro554–Ile613. The S1 motif domain maps to Gly623–Lys691. A disordered region spans residues Asp694–Glu739. The span at Ile701 to Glu739 shows a compositional bias: basic and acidic residues.

The protein belongs to the polyribonucleotide nucleotidyltransferase family. Mg(2+) serves as cofactor.

The protein localises to the cytoplasm. It carries out the reaction RNA(n+1) + phosphate = RNA(n) + a ribonucleoside 5'-diphosphate. Its function is as follows. Involved in mRNA degradation. Catalyzes the phosphorolysis of single-stranded polyribonucleotides processively in the 3'- to 5'-direction. This is Polyribonucleotide nucleotidyltransferase from Methylobacterium radiotolerans (strain ATCC 27329 / DSM 1819 / JCM 2831 / NBRC 15690 / NCIMB 10815 / 0-1).